A 124-amino-acid chain; its full sequence is Small ribosomal subunit protein uS12c (124 aa).

2 disordered regions span residues Met-1 to Pro-28 and Ala-104 to Ser-124. Basic residues-rich tracts occupy residues Glu-11–Lys-20 and Asp-109–Ser-124.

It belongs to the universal ribosomal protein uS12 family. In terms of assembly, part of the 30S ribosomal subunit.

Its subcellular location is the plastid. It is found in the chloroplast. In terms of biological role, with S4 and S5 plays an important role in translational accuracy. Located at the interface of the 30S and 50S subunits. The protein is Small ribosomal subunit protein uS12c (rps12) of Porphyra purpurea (Red seaweed).